Consider the following 96-residue polypeptide: Large ribosomal subunit protein eL14 (96 aa).

This sequence belongs to the eukaryotic ribosomal protein eL14 family.

The chain is Large ribosomal subunit protein eL14 from Saccharolobus islandicus (strain Y.N.15.51 / Yellowstone #2) (Sulfolobus islandicus).